The chain runs to 389 residues: Phospho-N-acetylmuramoyl-pentapeptide-transferase (389 aa).

A run of 10 helical transmembrane segments spans residues 25–45, 73–93, 97–117, 135–155, 190–210, 222–242, 258–278, 286–306, 311–331, and 366–386; these read RAVMATVTALLIGLAAGPWVI, TMGGVLILIGIFVSCMLWADL, FIWIVMIVTFGFGAVGWVDDY, FWQTLIGLFAAIYLAFSVSEI, VSYPLGMMGFIILSYLVIVGS, GLVIMPVILVGAALGAFAYVM, GAGELMIFCGAMGGAGLAFLW, VFMGDVGALALGGALGTIAVI, IVLFVMGGIFVAETVSVMMQV, and QVVVRFWIITILLVLIGLSSL.

This sequence belongs to the glycosyltransferase 4 family. MraY subfamily. Mg(2+) serves as cofactor.

It is found in the cell inner membrane. The enzyme catalyses UDP-N-acetyl-alpha-D-muramoyl-L-alanyl-gamma-D-glutamyl-meso-2,6-diaminopimeloyl-D-alanyl-D-alanine + di-trans,octa-cis-undecaprenyl phosphate = di-trans,octa-cis-undecaprenyl diphospho-N-acetyl-alpha-D-muramoyl-L-alanyl-D-glutamyl-meso-2,6-diaminopimeloyl-D-alanyl-D-alanine + UMP. It functions in the pathway cell wall biogenesis; peptidoglycan biosynthesis. In terms of biological role, catalyzes the initial step of the lipid cycle reactions in the biosynthesis of the cell wall peptidoglycan: transfers peptidoglycan precursor phospho-MurNAc-pentapeptide from UDP-MurNAc-pentapeptide onto the lipid carrier undecaprenyl phosphate, yielding undecaprenyl-pyrophosphoryl-MurNAc-pentapeptide, known as lipid I. This Polynucleobacter asymbioticus (strain DSM 18221 / CIP 109841 / QLW-P1DMWA-1) (Polynucleobacter necessarius subsp. asymbioticus) protein is Phospho-N-acetylmuramoyl-pentapeptide-transferase.